We begin with the raw amino-acid sequence, 940 residues long: Isoleucine--tRNA ligase (940 aa).

The 'HIGH' region signature appears at 58-68 (PYANGDIHIGH). An L-isoleucyl-5'-AMP-binding site is contributed by Glu564. The 'KMSKS' region motif lies at 605–609 (KMSKS). Lys608 provides a ligand contact to ATP. Cys903, Cys906, Cys923, and Cys926 together coordinate Zn(2+).

This sequence belongs to the class-I aminoacyl-tRNA synthetase family. IleS type 1 subfamily. Monomer. Zn(2+) serves as cofactor.

The protein resides in the cytoplasm. It carries out the reaction tRNA(Ile) + L-isoleucine + ATP = L-isoleucyl-tRNA(Ile) + AMP + diphosphate. Its function is as follows. Catalyzes the attachment of isoleucine to tRNA(Ile). As IleRS can inadvertently accommodate and process structurally similar amino acids such as valine, to avoid such errors it has two additional distinct tRNA(Ile)-dependent editing activities. One activity is designated as 'pretransfer' editing and involves the hydrolysis of activated Val-AMP. The other activity is designated 'posttransfer' editing and involves deacylation of mischarged Val-tRNA(Ile). The sequence is that of Isoleucine--tRNA ligase from Shewanella halifaxensis (strain HAW-EB4).